A 243-amino-acid polypeptide reads, in one-letter code: MSEFQVPEIPAQFLPKHIALVMDGNGRWATERGMKRTEGHKRGEAVLLDVVDACIELGVPYLSAYAFSTENWRRSTDEVRFLMGFNRDVLRRQRDDLHEKGVRVRWVGRRPRLWRSVIRELETAEELTKDNTTMTLAMCVNYGGRAEIIDAARDIARLAAEGKLRPEQITEKTFPNFLDEPDMPDVDLFLRPSGEKRTSNFLLWQSAYAEMVYQDKLFPDFTQQDLYDAVLEYAKRDRRFGSA.

The active site involves aspartate 23. A Mg(2+)-binding site is contributed by aspartate 23. Substrate is bound by residues glycine 24–arginine 27, tryptophan 28, arginine 36, histidine 40, and serine 68–glutamate 70. The active-site Proton acceptor is the asparagine 71. Residues tryptophan 72, arginine 74, arginine 191, and arginine 197–serine 199 contribute to the substrate site. Glutamate 210 is a Mg(2+) binding site.

It belongs to the UPP synthase family. Homodimer. Requires Mg(2+) as cofactor.

Catalyzes the condensation of isopentenyl diphosphate (IPP) with allylic pyrophosphates generating different type of terpenoids. The protein is Isoprenyl transferase 2 of Corynebacterium glutamicum (strain ATCC 13032 / DSM 20300 / JCM 1318 / BCRC 11384 / CCUG 27702 / LMG 3730 / NBRC 12168 / NCIMB 10025 / NRRL B-2784 / 534).